The following is a 199-amino-acid chain: Putative DNA-directed RNA polymerase subunit L376 (199 aa).

It belongs to the eukaryotic RPB7/RPC8 RNA polymerase subunit family.

Its subcellular location is the virion. It catalyses the reaction RNA(n) + a ribonucleoside 5'-triphosphate = RNA(n+1) + diphosphate. This is Putative DNA-directed RNA polymerase subunit L376 from Acanthamoeba polyphaga (Amoeba).